The primary structure comprises 427 residues: MAVLAALLRGGARSRSPLLRRLVQEIRYVERSYVSKPTLKEVVIVSATRTPIGSFLGSLSLLPTTKLGSIAMQGAIEKAGIPKEEVKEAYMGNVLQGGEGQAPARQAVLGAGLPISTPRTTINKVCASGMKAIMMASQSLMCGHQDVMVAGGMESMSNVPYVMNRGSTPYGGVKLEDLIVKDGLTDVYNKIHMGSCAENTAKKLNIARDEQDAYAINSYTRSKAAWEAGKFGNEVIPVTVTVKGQPDVVVKEDEEYKRVDFSKVPKLKTVFQKENGTITAANASTLNDGAAALVLMTAGAAKRLNVTPLARIVAFADAAVEPIDFPIAPVHAVSMVLKDVGLKKEDIAMWEVNEAFSLVVLANIKMLEIDPQKVNINGGAVSLGHPIGMSGARIVGHLTHALKQGEYGLASICNGGGGASAMLIQKL.

The transit peptide at 1–33 (MAVLAALLRGGARSRSPLLRRLVQEIRYVERSY) directs the protein to the mitochondrion. Lysine 66 is subject to N6-acetyllysine; alternate. Lysine 66 carries the N6-succinyllysine; alternate modification. Lysine 78 carries the post-translational modification N6-succinyllysine. Cysteine 126 functions as the Acyl-thioester intermediate in the catalytic mechanism. An N6-acetyllysine; alternate mark is found at lysine 174, lysine 181, lysine 190, and lysine 202. N6-succinyllysine; alternate occurs at positions 174, 181, 190, and 202. Tyrosine 219 is a binding site for CoA. A K(+)-binding site is contributed by tyrosine 219. N6-acetyllysine; alternate occurs at positions 223 and 230. Lysine 223 and lysine 230 each carry N6-succinyllysine; alternate. Lysine 243 bears the N6-succinyllysine mark. 2 positions are modified to N6-acetyllysine: lysine 251 and lysine 257. CoA-binding positions include 258-260 (RVD) and lysine 263. Lysine 263 carries the post-translational modification N6-acetyllysine; alternate. Lysine 263 is modified (N6-succinyllysine; alternate). N6-succinyllysine occurs at positions 266 and 268. Residue lysine 273 is modified to N6-acetyllysine. 3 residues coordinate K(+): alanine 280, alanine 281, and alanine 283. Serine 284 serves as a coordination point for CoA. N6-acetyllysine is present on lysine 338. Valine 381 is a K(+) binding site. Cysteine 413 functions as the Proton donor/acceptor in the catalytic mechanism.

It belongs to the thiolase-like superfamily. Thiolase family. As to quaternary structure, homotetramer. Succinylation at Lys-268, adjacent to a coenzyme A binding site. Desuccinylated by SIRT5.

Its subcellular location is the mitochondrion. The enzyme catalyses 2 acetyl-CoA = acetoacetyl-CoA + CoA. It catalyses the reaction propanoyl-CoA + acetyl-CoA = 2-methyl-3-oxobutanoyl-CoA + CoA. The protein operates within lipid metabolism; fatty acid beta-oxidation. Activated by potassium ions, but not sodium ions. In terms of biological role, this is one of the enzymes that catalyzes the last step of the mitochondrial beta-oxidation pathway, an aerobic process breaking down fatty acids into acetyl-CoA. Using free coenzyme A/CoA, catalyzes the thiolytic cleavage of medium- to long-chain 3-oxoacyl-CoAs into acetyl-CoA and a fatty acyl-CoA shortened by two carbon atoms. The activity of the enzyme is reversible and it can also catalyze the condensation of two acetyl-CoA molecules into acetoacetyl-CoA. Thereby, it plays a major role in ketone body metabolism. The protein is Acetyl-CoA acetyltransferase, mitochondrial (ACAT1) of Macaca fascicularis (Crab-eating macaque).